The sequence spans 551 residues: Chaperonin GroEL (551 aa).

Residues Thr29 to Pro32, Lys50, Asp86 to Thr90, Gly414, Asn478 to Ala480, and Asp494 each bind ATP.

It belongs to the chaperonin (HSP60) family. In terms of assembly, forms a cylinder of 14 subunits composed of two heptameric rings stacked back-to-back. Interacts with the co-chaperonin GroES.

Its subcellular location is the cytoplasm. It carries out the reaction ATP + H2O + a folded polypeptide = ADP + phosphate + an unfolded polypeptide.. In terms of biological role, together with its co-chaperonin GroES, plays an essential role in assisting protein folding. The GroEL-GroES system forms a nano-cage that allows encapsulation of the non-native substrate proteins and provides a physical environment optimized to promote and accelerate protein folding. The protein is Chaperonin GroEL of Legionella jeonii.